A 352-amino-acid chain; its full sequence is Serine protease 55 (352 aa).

The signal sequence occupies residues Met-1 to Leu-18. The Peptidase S1 domain occupies Ile-68 to Gln-300. Cysteines 93 and 109 form a disulfide. Active-site charge relay system residues include His-108 and Asp-156. 3 disulfides stabilise this stretch: Cys-189-Cys-256, Cys-222-Cys-235, and Cys-246-Cys-276. A glycan (N-linked (GlcNAc...) asparagine) is linked at Asn-240. Ser-250 (charge relay system) is an active-site residue. The interval Ala-308–Pro-330 is disordered. Low complexity predominate over residues Pro-319–Pro-330. A lipid anchor (GPI-anchor amidated serine) is attached at Ser-325. Residues Gly-326–Tyr-352 constitute a propeptide, removed in mature form.

Belongs to the peptidase S1 family. In terms of tissue distribution, only detected in testis. Expressed in spermatogonia, spermatocytes, spermatids, Leydig and Sertoli cells. Expressed in prostate cancer and ovarian cancer (at protein level).

It is found in the cell membrane. Its subcellular location is the cytoplasm. It localises to the cytosol. Probable serine protease, which plays a crucial role in the fertility of male mice including sperm migration and sperm-egg interaction. The polypeptide is Serine protease 55 (PRSS55) (Homo sapiens (Human)).